A 385-amino-acid chain; its full sequence is UPF0284 protein A9601_04941 (385 aa).

The protein belongs to the UPF0284 family.

This is UPF0284 protein A9601_04941 from Prochlorococcus marinus (strain AS9601).